The chain runs to 74 residues: Anionic peptide clone 10 (74 aa).

The first 24 residues, 1-24, serve as a signal peptide directing secretion; the sequence is MVSKSLIVLLLVSVLVSTFFTTEA.

Belongs to the non-disulfide-bridged peptide (NDBP) superfamily. Long chain multifunctional peptide (group 2) family. Expressed by the venom gland.

It localises to the secreted. Its function is as follows. May be an antimicrobial peptide. In Tityus costatus (Brazilian scorpion), this protein is Anionic peptide clone 10.